The primary structure comprises 522 residues: Circadian clock oscillator protein KaiC (522 aa).

2 KaiC domains span residues 1-248 (MKKS…INIF) and 262-522 (ARVS…DDLL). Residues Gly-50, Thr-51, Gly-52, Lys-53, Thr-54, Ser-90, Lys-225, Leu-226, Arg-227, Thr-229, His-231, Thr-241, Asp-242, Thr-291, Gly-292, Thr-293, Gly-294, Lys-295, Thr-296, and Leu-297 each coordinate ATP. Thr-54 lines the Mg(2+) pocket. Thr-296 provides a ligand contact to Mg(2+). Glu-319 lines the Mg(2+) pocket. Residue Trp-332 coordinates ATP. Position 432 is a phosphoserine; by autocatalysis (Ser-432). Thr-433 carries the phosphothreonine; by autocatalysis modification. ATP contacts are provided by Arg-452, Lys-458, Met-459, Arg-460, Ser-462, His-464, and Lys-466.

Belongs to the KaiC family. Homohexamer; hexamerization is dependent on ATP-binding. The KaiABC complex composition changes during the circadian cycle to control KaiC phosphorylation. Complexes KaiC(6), KaiA(2-4):KaiC(6), KaiB(6):KaiC(6) and KaiC(6):KaiB(6):KaiA(12) are among the most important forms, many form cooperatively. KaiC interacts with SasA, activating its autokinase function and leading to RpaA activation. It depends on Mg(2+) as a cofactor. Phosphorylated on serine and threonine residues by autocatalysis. Has a 4 step phosphorylation cycle; the autokinase acts first on Thr-433, then Ser-432. When Ser-432 is modified KaiC switches to an autophosphatase mode, acting first on phospho-Thr-433 then phospho-Ser-432.

The catalysed reaction is L-seryl-[protein] + ATP = O-phospho-L-seryl-[protein] + ADP + H(+). It carries out the reaction L-threonyl-[protein] + ATP = O-phospho-L-threonyl-[protein] + ADP + H(+). The enzyme catalyses ATP + H2O = ADP + phosphate + H(+). The interaction with KaiA enhances its phosphorylation status, while the interaction with KaiB decreases it. Its function is as follows. Central component of the KaiABC oscillator complex, which constitutes the main circadian regulator in cyanobacteria. Complex composition changes during the circadian cycle to control KaiC phosphorylation. KaiA stimulates KaiC autophosphorylation, while KaiB sequesters KaiA, leading to KaiC autodephosphorylation. Clock output pathways impact the RpaA transcriptional regulator. KaiC enhances the autophosphorylation activity of SasA, which then transfers its phosphate group to RpaA to activate it. KaiB and KaiC together enhance the phospho-RpaA dephosphatase activity of CikA. Functionally, has a weak, temperature-independent ATPase activity; ATPase activity defines the circadian period. The phosphorylation state of KaiC modulates its ATPase activity and effects KaiB binding. In Acaryochloris marina (strain MBIC 11017), this protein is Circadian clock oscillator protein KaiC.